Consider the following 325-residue polypeptide: Cytochrome c biogenesis protein CcsA (325 aa).

8 helical membrane-spanning segments follow: residues 14-34 (TFAILLPTLLCYWTGVAFPNL), 36-56 (GLPAIGTAGMAIANLCMAALL), 68-88 (ISNLYESLFFLAWGLTAIHLL), 97-117 (LVGAATSPLALGIVAFAAFTL), 142-162 (VMMVSYAALLVGSLLSVAFLV), 233-253 (VIGLGFPLLTIGIIAGAVWAN), 260-280 (WSWDPKETWALITWLVFAAYL), and 294-314 (AILATVGFGVVWVCYLGVNLL).

This sequence belongs to the CcmF/CycK/Ccl1/NrfE/CcsA family. As to quaternary structure, may interact with ccs1.

Its subcellular location is the cellular thylakoid membrane. In terms of biological role, required during biogenesis of c-type cytochromes (cytochrome c6 and cytochrome f) at the step of heme attachment. In Synechococcus sp. (strain ATCC 27144 / PCC 6301 / SAUG 1402/1) (Anacystis nidulans), this protein is Cytochrome c biogenesis protein CcsA.